The sequence spans 276 residues: Secreted RxLR effector protein 150 (276 aa).

Residues 1 to 18 (MRNIAFLIGLFFIGYSSC) form the signal peptide. The RxLR-dEER motif lies at 49–64 (RTLQADDRERILAEER).

This sequence belongs to the RxLR effector family.

The protein resides in the secreted. It localises to the host nucleus. The protein localises to the host cytoplasm. Secreted effector that partially suppresses the host cell death induced by cell death-inducing proteins. The sequence is that of Secreted RxLR effector protein 150 from Plasmopara viticola (Downy mildew of grapevine).